Here is a 201-residue protein sequence, read N- to C-terminus: FMN-dependent NADH:quinone oxidoreductase (201 aa).

FMN is bound by residues Ser-10, 16 to 18 (SQS), 96 to 99 (MYNF), and 140 to 143 (SRGG).

The protein belongs to the azoreductase type 1 family. As to quaternary structure, homodimer. The cofactor is FMN.

The enzyme catalyses 2 a quinone + NADH + H(+) = 2 a 1,4-benzosemiquinone + NAD(+). It carries out the reaction N,N-dimethyl-1,4-phenylenediamine + anthranilate + 2 NAD(+) = 2-(4-dimethylaminophenyl)diazenylbenzoate + 2 NADH + 2 H(+). In terms of biological role, quinone reductase that provides resistance to thiol-specific stress caused by electrophilic quinones. Functionally, also exhibits azoreductase activity. Catalyzes the reductive cleavage of the azo bond in aromatic azo compounds to the corresponding amines. The chain is FMN-dependent NADH:quinone oxidoreductase from Yersinia enterocolitica serotype O:8 / biotype 1B (strain NCTC 13174 / 8081).